A 553-amino-acid polypeptide reads, in one-letter code: Probable malate:quinone oxidoreductase (553 aa).

A disordered region spans residues 524-553; it reads PPPKIDVNTPSQATGTAPARPAKASADMAL.

This sequence belongs to the MQO family. Requires FAD as cofactor.

It catalyses the reaction (S)-malate + a quinone = a quinol + oxaloacetate. It participates in carbohydrate metabolism; tricarboxylic acid cycle; oxaloacetate from (S)-malate (quinone route): step 1/1. This is Probable malate:quinone oxidoreductase from Burkholderia lata (strain ATCC 17760 / DSM 23089 / LMG 22485 / NCIMB 9086 / R18194 / 383).